The following is an 89-amino-acid chain: Defensin-like protein 78 (89 aa).

Positions 1–30 (MANNMVASPYKNTFMMIALVLILLISGSEA) are cleaved as a signal peptide. 4 disulfide bridges follow: C40–C75, C44–C67, C52–C73, and C56–C74.

It belongs to the DEFL family.

The protein resides in the secreted. The sequence is that of Defensin-like protein 78 from Arabidopsis thaliana (Mouse-ear cress).